We begin with the raw amino-acid sequence, 300 residues long: ETS homologous factor (300 aa).

Positions 29-115 (STCNVSSGFF…SNLQHLKWNG (87 aa)) constitute a PNT domain. Positions 183–202 (ESPDMKKEQDPPAKCHTKKH) are disordered. Residues 185 to 195 (PDMKKEQDPPA) show a composition bias toward basic and acidic residues. The ETS DNA-binding region spans 207-289 (THLWEFIRDI…DGRRLVYKFG (83 aa)).

This sequence belongs to the ETS family. As to expression, expressed exclusively in tissues with a high content of epithelial cells. Highly expressed in salivary gland, mammary gland, prostate, and lung. Weakly expressed in kidney and colon. Not detected in heart, brain, placenta, liver, skeletal muscle, spleen, thymus, testis, ovary, small intestine or peripheral blood leukocytes.

It localises to the nucleus. In terms of biological role, transcriptional activator that may play a role in regulating epithelial cell differentiation and proliferation. May act as a repressor for a specific subset of ETS/AP-1-responsive genes and as a modulator of the nuclear response to mitogen-activated protein kinase signaling cascades. Binds to DNA sequences containing the consensus nucleotide core sequence GGAA. Involved in regulation of TNFRSF10B/DR5 expression through Ets-binding sequences on the TNFRSF10B/DR5 promoter. May contribute to development and carcinogenesis by acting as a tumor suppressor gene or anti-oncogene. This Homo sapiens (Human) protein is ETS homologous factor.